An 883-amino-acid polypeptide reads, in one-letter code: Putative pentatricopeptide repeat-containing protein At1g13800 (883 aa).

PPR repeat units follow at residues 145 to 180 (LIRV…GRAP), 181 to 215 (DIKA…GLDA), 216 to 251 (DAHT…TRNP), 253 to 285 (VFYL…NILV), 290 to 324 (LGIA…GIDP), 325 to 359 (DVYV…RKRI), 360 to 394 (NCVI…NISL), 395 to 429 (DRVC…GIAP), 430 to 464 (DVIN…GKTP), 465 to 499 (DIVI…GVKP), 500 to 534 (TYVT…SREN), 537 to 561 (SMVK…LEFP), 563 to 598 (PKSV…GVEP), 599 to 633 (EKSM…KIVP), 634 to 668 (DLFT…DVKP), 697 to 731 (DVVY…EIVP), 760 to 794 (DVFY…GVDP), 795 to 829 (DAAP…GVKP), and 830 to 864 (DVVP…GIKP).

It belongs to the PPR family. P subfamily.

This chain is Putative pentatricopeptide repeat-containing protein At1g13800, found in Arabidopsis thaliana (Mouse-ear cress).